The following is a 451-amino-acid chain: Gamma-aminobutyric acid receptor subunit alpha-2 (451 aa).

A signal peptide spans 1 to 28 (MRTKLSTCNVWFPLLVLLVWNPARLVLA). Residues 29-249 (NIQEDEAKNN…MTAHFHLKRK (221 aa)) are Extracellular-facing. N-linked (GlcNAc...) asparagine glycosylation occurs at N38. R94 is a binding site for 4-aminobutanoate. N114 and N138 each carry an N-linked (GlcNAc...) asparagine glycan. A 4-aminobutanoate-binding site is contributed by T157. C166 and C180 are oxidised to a cystine. Transmembrane regions (helical) follow at residues 250-270 (IGYF…LSQV), 281-300 (ARTV…SISA), and 312-332 (AMDW…IEFA). The Cytoplasmic portion of the chain corresponds to 333–420 (TVNYFTKRGW…FNSVSKIDRM (88 aa)). The segment at 389 to 408 (KSATTPEPNKKPENKPAEAK) is disordered. The span at 396–408 (PNKKPENKPAEAK) shows a compositional bias: basic and acidic residues. Residues 421 to 441 (SRIVFPVLFGTFNLVYWATYL) traverse the membrane as a helical segment. The Extracellular segment spans residues 442 to 451 (NREPVLGVSP).

The protein belongs to the ligand-gated ion channel (TC 1.A.9) family. Gamma-aminobutyric acid receptor (TC 1.A.9.5) subfamily. GABRA2 sub-subfamily. In terms of assembly, heteropentamer, formed by a combination of alpha (GABRA1-6), beta (GABRB1-3), gamma (GABRG1-3), delta (GABRD), epsilon (GABRE), rho (GABRR1-3), pi (GABRP) and theta (GABRQ) subunits, each subunit exhibiting distinct physiological and pharmacological properties. Binds UBQLN1. Interacts with KIF21B. Interacts with LHFPL4. Interacts with SHISA7; interaction leads to the regulation of GABA(A) receptor trafficking, channel deactivation kinetics and pharmacology. In terms of processing, glycosylated. As to expression, expressed in brain (at protein level).

It localises to the postsynaptic cell membrane. It is found in the cell membrane. The protein resides in the cytoplasmic vesicle membrane. The protein localises to the cell projection. Its subcellular location is the dendrite. It carries out the reaction chloride(in) = chloride(out). Its activity is regulated as follows. Activated by pentobarbital. Inhibited by the antagonist bicuculline. Its function is as follows. Alpha subunit of the heteropentameric ligand-gated chloride channel gated by gamma-aminobutyric acid (GABA), a major inhibitory neurotransmitter in the brain. GABA-gated chloride channels, also named GABA(A) receptors (GABAAR), consist of five subunits arranged around a central pore and contain GABA active binding site(s) located at the alpha and beta subunit interface(s). When activated by GABA, GABAARs selectively allow the flow of chloride anions across the cell membrane down their electrochemical gradient. Chloride influx into the postsynaptic neuron following GABAAR opening decreases the neuron ability to generate a new action potential, thereby reducing nerve transmission. The alpha-2 subunit exhibits synaptogenic activity together with beta-2 and very little to no activity together with beta-3, the gamma-2 subunit being necessary but not sufficient to induce rapid synaptic contacts formation. The polypeptide is Gamma-aminobutyric acid receptor subunit alpha-2 (Rattus norvegicus (Rat)).